The primary structure comprises 142 residues: MVLSATDKSNVKAAWGKVGGNAPAYGAEALERMFLSFPTTKTYFPHFDLSHGSAQVKAHGEKVANALTKAVGHLDDLPGTLSDLSDLHAHKLRVDPVNFKLLSHTLLVTLAAHLPSDFTPAVHASLDKFLANVSTVLTSKYR.

Residues 2 to 142 form the Globin domain; the sequence is VLSATDKSNV…VSTVLTSKYR (141 aa). Serine 4 is modified (phosphoserine). An N6-succinyllysine mark is found at lysine 8 and lysine 12. An N6-acetyllysine; alternate modification is found at lysine 17. The residue at position 17 (lysine 17) is an N6-succinyllysine; alternate. Tyrosine 25 carries the post-translational modification Phosphotyrosine. Serine 36 is modified (phosphoserine). The residue at position 41 (lysine 41) is an N6-succinyllysine. Residue serine 50 is modified to Phosphoserine. An O2-binding site is contributed by histidine 59. Histidine 88 contacts heme b. Residue serine 103 is modified to Phosphoserine. Position 109 is a phosphothreonine (threonine 109). Position 125 is a phosphoserine (serine 125). Phosphothreonine occurs at positions 135 and 138. Residue serine 139 is modified to Phosphoserine.

It belongs to the globin family. In terms of assembly, heterotetramer of two alpha chains and two beta chains. Red blood cells.

Its function is as follows. Involved in oxygen transport from the lung to the various peripheral tissues. Functionally, hemopressin acts as an antagonist peptide of the cannabinoid receptor CNR1. Hemopressin-binding efficiently blocks cannabinoid receptor CNR1 and subsequent signaling. This chain is Hemoglobin subunit alpha (HBA), found in Alces alces alces (European moose).